We begin with the raw amino-acid sequence, 968 residues long: MPFALGQRWISDTESELGLGTVVQVEGRMVTVLFPATGENRMFSRNEAPLTRVIYNPGDTVESHEGWSLSVEELTEKDDLVVYHGIHSETGEKVSLRETLLNHNIRFNKPQDRLFAGQIDRLDRFGIRYQCQLLRHQLATSDLLGLQGPRVGLIPHQMWIAHEVGRRYAPRVLLADEVGLGKTIEAGLIIHQQLLTCRAERVLIIVPDTLRHQWLVEMLRRFNLRFSVFDEDRCVEAFADHDNPFYTEQLVICSLELLRKKKRLDQALDADWDLLVVDEAHHLEWTEEAPSRAYQVVEALSEVVPGVLLLTATPDQLGHESHFARLRLLDPDRFYDYDAFLAEENSYKDVAIAAEALAGESKLSDYAINSLTELLSEKDIAPSIRLIQAEGIDSELQQAARSELLQELLDRHGTGRVLYRNSRASVKGFPKRIFNAYPHAMPEQYLTAARVNDMMGGRKSLEAKAAQALSPEKLYQEFEDNSASWWKFDPRVDWLIEFLKSHRSKKVLIIASGADTALSLEEALRTREGIQATVFHEGMSIIERDKAGAYFAQEEGGAQALICSEIGSEGRNFQFASHLVLFDLPLNPDLLEQRIGRLDRIGQKNDIQIHLPYLQDTAQERLLQWYHQGLNAFELTCPGGHILFSEFAEELLNVLVGGDEDELTNLLNHTQSRYKELKHAMEQGRDKLLEINSHGGDKAKAIVERLAQSDQDTKLIGSVIRLWDIIGVDQEDKGENSIILRPSEHMMFPTYPGLHEDGVTVTFDRDTALSRDDIALITQEHPLVQTGLDLITGSDTGTTSVAILKNKALPAGTLFLELIYMADASAPKSSQLYRYLPPTPIRILLDKNGNDLSAKVDYTSFDKQLSAVNRHIGSKLVTASQPILHPLFAKGEEYAQVAVNELVAQAREKMTSQLTGELERLESLKAVNPNIREEELEYLRNQMQELTTYLDASQLQLDAIRMVLVSHV.

The 170-residue stretch at 163–332 (EVGRRYAPRV…FARLRLLDPD (170 aa)) folds into the Helicase ATP-binding domain. Position 176–183 (176–183 (DEVGLGKT)) interacts with ATP. The DEAH box motif lies at 278-281 (DEAH). In terms of domain architecture, Helicase C-terminal spans 491-655 (RVDWLIEFLK…EFAEELLNVL (165 aa)).

Belongs to the SNF2/RAD54 helicase family. RapA subfamily. As to quaternary structure, interacts with the RNAP. Has a higher affinity for the core RNAP than for the holoenzyme. Its ATPase activity is stimulated by binding to RNAP.

Its function is as follows. Transcription regulator that activates transcription by stimulating RNA polymerase (RNAP) recycling in case of stress conditions such as supercoiled DNA or high salt concentrations. Probably acts by releasing the RNAP, when it is trapped or immobilized on tightly supercoiled DNA. Does not activate transcription on linear DNA. Probably not involved in DNA repair. In Shewanella oneidensis (strain ATCC 700550 / JCM 31522 / CIP 106686 / LMG 19005 / NCIMB 14063 / MR-1), this protein is RNA polymerase-associated protein RapA.